The chain runs to 105 residues: Nitrogen fixation nifHD region glnB-like protein 1 (105 aa).

It belongs to the P(II) protein family.

Could be involved in the regulation of nitrogen fixation. This chain is Nitrogen fixation nifHD region glnB-like protein 1 (glnBI), found in Methanococcus maripaludis (Methanococcus deltae).